We begin with the raw amino-acid sequence, 254 residues long: Dihydroorotate dehydrogenase B (NAD(+)), electron transfer subunit (254 aa).

Residues 1–99 (MLQTEMKVIQ…LGPLGKGFDI (99 aa)) enclose the FAD-binding FR-type domain. Residues 50–53 (RPIS), 67–69 (LYR), and 74–75 (GT) contribute to the FAD site. [2Fe-2S] cluster is bound by residues Cys218, Cys223, Cys226, and Cys241.

It belongs to the PyrK family. As to quaternary structure, heterotetramer of 2 PyrK and 2 PyrD type B subunits. It depends on [2Fe-2S] cluster as a cofactor. Requires FAD as cofactor.

It participates in pyrimidine metabolism; UMP biosynthesis via de novo pathway; orotate from (S)-dihydroorotate (NAD(+) route): step 1/1. In terms of biological role, responsible for channeling the electrons from the oxidation of dihydroorotate from the FMN redox center in the PyrD type B subunit to the ultimate electron acceptor NAD(+). The protein is Dihydroorotate dehydrogenase B (NAD(+)), electron transfer subunit of Listeria monocytogenes serotype 4b (strain F2365).